A 263-amino-acid polypeptide reads, in one-letter code: 3-deoxy-manno-octulosonate cytidylyltransferase (263 aa).

The protein belongs to the KdsB family.

It is found in the cytoplasm. The catalysed reaction is 3-deoxy-alpha-D-manno-oct-2-ulosonate + CTP = CMP-3-deoxy-beta-D-manno-octulosonate + diphosphate. It functions in the pathway nucleotide-sugar biosynthesis; CMP-3-deoxy-D-manno-octulosonate biosynthesis; CMP-3-deoxy-D-manno-octulosonate from 3-deoxy-D-manno-octulosonate and CTP: step 1/1. The protein operates within bacterial outer membrane biogenesis; lipopolysaccharide biosynthesis. Its function is as follows. Activates KDO (a required 8-carbon sugar) for incorporation into bacterial lipopolysaccharide in Gram-negative bacteria. The polypeptide is 3-deoxy-manno-octulosonate cytidylyltransferase (Burkholderia cenocepacia (strain HI2424)).